The primary structure comprises 137 residues: NADPH-dependent 7-cyano-7-deazaguanine reductase (137 aa).

C45 functions as the Thioimide intermediate in the catalytic mechanism. D52 functions as the Proton donor in the catalytic mechanism. Residues 68-70 (VEL) and 87-88 (QE) each bind substrate.

Belongs to the GTP cyclohydrolase I family. QueF type 1 subfamily.

The protein localises to the cytoplasm. It catalyses the reaction 7-aminomethyl-7-carbaguanine + 2 NADP(+) = 7-cyano-7-deazaguanine + 2 NADPH + 3 H(+). Its pathway is tRNA modification; tRNA-queuosine biosynthesis. Its function is as follows. Catalyzes the NADPH-dependent reduction of 7-cyano-7-deazaguanine (preQ0) to 7-aminomethyl-7-deazaguanine (preQ1). The polypeptide is NADPH-dependent 7-cyano-7-deazaguanine reductase (Thermotoga petrophila (strain ATCC BAA-488 / DSM 13995 / JCM 10881 / RKU-1)).